Reading from the N-terminus, the 1476-residue chain is ABC-type transporter FG02316 (1476 aa).

Asn-2 carries N-linked (GlcNAc...) asparagine glycosylation. 10 consecutive transmembrane segments (helical) span residues 23-43 (FTLL…LLLA), 64-84 (WLYC…AFLV), 97-117 (SLPA…LSYV), 156-176 (AAIT…AETI), 266-286 (ILFI…QPFL), 305-325 (QGYG…VTTG), 384-404 (VWAN…QLGL), 407-427 (LIPV…VSFV), 485-505 (LLIW…VLSF), and 532-552 (LFAL…SFMG). The 279-residue stretch at 274–552 (LCFIGFTFCQ…FVTSLSSFMG (279 aa)) folds into the ABC transmembrane type-1 1 domain. The interval 586-615 (ISGVSSSEEKHPVSPIQESMMKTEPSGDSP) is disordered. Residues 622–847 (IRNASFGYDR…SDNYVSHSDV (226 aa)) form the ABC transporter 1 domain. Asn-624 carries an N-linked (GlcNAc...) asparagine glycan. 654-661 (GPVGSGKS) is an ATP binding site. N-linked (GlcNAc...) asparagine glycosylation is found at Asn-682, Asn-696, Asn-798, and Asn-836. Residues 842–870 (VSHSDVSSPDGARSKAPSSGPASSSAPVP) form a disordered region. A compositionally biased stretch (low complexity) spans 855-870 (SKAPSSGPASSSAPVP). The next 6 membrane-spanning stretches (helical) occupy residues 906 to 926 (MNAI…AYIF), 950 to 970 (LGYY…FLVL), 1021 to 1041 (LIDM…VLCI), 1045 to 1065 (ILIA…LATL), 1137 to 1157 (WLTL…VVLV), and 1167 to 1187 (GLIG…KLLM). Positions 916–1195 (VFVLAICAYI…LMTFWTTLET (280 aa)) constitute an ABC transmembrane type-1 2 domain. Positions 1232–1464 (ILFDQVSAGY…GPDASTFASM (233 aa)) constitute an ABC transporter 2 domain. An N-linked (GlcNAc...) asparagine glycan is attached at Asn-1250. 1265 to 1272 (GRTGSGKS) is a binding site for ATP. Residue Asn-1414 is glycosylated (N-linked (GlcNAc...) asparagine).

This sequence belongs to the ABC transporter superfamily. ABCC family. Conjugate transporter (TC 3.A.1.208) subfamily.

It is found in the cell membrane. Its function is as follows. ABC-type transporter; part of the gene cluster that mediates the biosynthesis of the fusahexin, a cyclic hydrophobic hexapeptide with the amino acid sequence cyclo-(D-Ala-L-Leu-D-allo-Thr-L-Pro-D-Leu-L-Leu) that plays an important role in cell surface hydrophobicity. The protein is ABC-type transporter FG02316 of Gibberella zeae (strain ATCC MYA-4620 / CBS 123657 / FGSC 9075 / NRRL 31084 / PH-1) (Wheat head blight fungus).